A 57-amino-acid polypeptide reads, in one-letter code: Small hydrophobic protein (57 aa).

Over 1–8 (MPAIQPPL) the chain is Virion surface. Residues 9–29 (YLTFLLLILLYLIITLYVWTI) traverse the membrane as a helical segment. The Intravirion segment spans residues 30–57 (LTINHKTAVRYAALYQRSCSRWGFDQSL).

The protein belongs to the rubulavirus small hydrophobic protein family. Interacts with host TNFRSF1A, RIPK1 and IRAK1; these interactions interfere with host NF-kappa-B activation at the level of receptor complexes. Interacts with host protein UBQLN4.

It is found in the virion membrane. The protein resides in the host cell membrane. Its function is as follows. Plays a role in the inhibition of the host NF-kappa-B pathway. This inhibition occurs at the receptor level, by preventing the signaling of TNFR1 as well as IL-1R and TLR3. This is Small hydrophobic protein (SH) from Mumps virus (strain Enders) (MuV).